The sequence spans 512 residues: GMP synthase [glutamine-hydrolyzing] (512 aa).

In terms of domain architecture, Glutamine amidotransferase type-1 spans 9–198 (GVLVVDFGGQ…WLSLVGAPRT (190 aa)). Cys-87 functions as the Nucleophile in the catalytic mechanism. Residues His-173 and Glu-175 contribute to the active site. Residues 199–387 (WRPGDMVSEL…LGVPRELIWK (189 aa)) enclose the GMPS ATP-PPase domain. ATP is bound at residue 226 to 232 (SGGVDST).

It catalyses the reaction XMP + L-glutamine + ATP + H2O = GMP + L-glutamate + AMP + diphosphate + 2 H(+). It functions in the pathway purine metabolism; GMP biosynthesis; GMP from XMP (L-Gln route): step 1/1. Its function is as follows. Catalyzes the synthesis of GMP from XMP. This Aeropyrum pernix (strain ATCC 700893 / DSM 11879 / JCM 9820 / NBRC 100138 / K1) protein is GMP synthase [glutamine-hydrolyzing] (guaA).